The sequence spans 231 residues: Large ribosomal subunit protein uL1 (231 aa).

This sequence belongs to the universal ribosomal protein uL1 family. Part of the 50S ribosomal subunit.

Functionally, binds directly to 23S rRNA. The L1 stalk is quite mobile in the ribosome, and is involved in E site tRNA release. Protein L1 is also a translational repressor protein, it controls the translation of the L11 operon by binding to its mRNA. The polypeptide is Large ribosomal subunit protein uL1 (Neisseria meningitidis serogroup C (strain 053442)).